We begin with the raw amino-acid sequence, 358 residues long: MKKISVLIIDDSALIRKLLTEIINARPDMEVIGAAPDPIVAREMIRTLNPDVLTLDVEMPKMDGLEFLEKLMRLRPMPVVMVSTLTERGSEVTFRALELGAVDFVAKPKMDIRNSLEAYTDEITGKIRTASTARIHRLEPVASNGAASGSIVQMPRHHGISTEKLIIIGASTGGTEAIKDVLIHLPPDCPGILITQHMPEGFTRSFAERLDRLCKIRVKEAEGGERVLPGHAYLAPGHSHLLLKKSGANYVTELSQTDPVNRHRPSVDVLFQSAAHCAGKNAVGVILTGMGKDGAAGMLDMHHAGAYNLAQDETSCVVFGMPKEAITLGAVDEIVPLQDMARRILARLVGAGKQAVRV.

In terms of domain architecture, Response regulatory spans 5–122 (SVLIIDDSAL…RNSLEAYTDE (118 aa)). At Asp56 the chain carries 4-aspartylphosphate. The region spanning 159-351 (GISTEKLIII…RRILARLVGA (193 aa)) is the CheB-type methylesterase domain. Active-site residues include Ser171, His197, and Asp293.

It belongs to the CheB family. Phosphorylated by CheA. Phosphorylation of the N-terminal regulatory domain activates the methylesterase activity.

It localises to the cytoplasm. The catalysed reaction is [protein]-L-glutamate 5-O-methyl ester + H2O = L-glutamyl-[protein] + methanol + H(+). It carries out the reaction L-glutaminyl-[protein] + H2O = L-glutamyl-[protein] + NH4(+). Functionally, involved in chemotaxis. Part of a chemotaxis signal transduction system that modulates chemotaxis in response to various stimuli. Catalyzes the demethylation of specific methylglutamate residues introduced into the chemoreceptors (methyl-accepting chemotaxis proteins or MCP) by CheR. Also mediates the irreversible deamidation of specific glutamine residues to glutamic acid. This chain is Protein-glutamate methylesterase/protein-glutamine glutaminase, found in Nitrosomonas europaea (strain ATCC 19718 / CIP 103999 / KCTC 2705 / NBRC 14298).